The following is a 369-amino-acid chain: Queuine tRNA-ribosyltransferase (369 aa).

The active-site Proton acceptor is the D90. Residues 90–94 (DSGGF), D144, Q186, and G213 contribute to the substrate site. An RNA binding region spans residues 244–250 (GVGKPAD). The active-site Nucleophile is D263. Positions 301, 303, 306, and 332 each coordinate Zn(2+).

Belongs to the queuine tRNA-ribosyltransferase family. As to quaternary structure, homodimer. Within each dimer, one monomer is responsible for RNA recognition and catalysis, while the other monomer binds to the replacement base PreQ1. Requires Zn(2+) as cofactor.

It catalyses the reaction 7-aminomethyl-7-carbaguanine + guanosine(34) in tRNA = 7-aminomethyl-7-carbaguanosine(34) in tRNA + guanine. It functions in the pathway tRNA modification; tRNA-queuosine biosynthesis. Functionally, catalyzes the base-exchange of a guanine (G) residue with the queuine precursor 7-aminomethyl-7-deazaguanine (PreQ1) at position 34 (anticodon wobble position) in tRNAs with GU(N) anticodons (tRNA-Asp, -Asn, -His and -Tyr). Catalysis occurs through a double-displacement mechanism. The nucleophile active site attacks the C1' of nucleotide 34 to detach the guanine base from the RNA, forming a covalent enzyme-RNA intermediate. The proton acceptor active site deprotonates the incoming PreQ1, allowing a nucleophilic attack on the C1' of the ribose to form the product. After dissociation, two additional enzymatic reactions on the tRNA convert PreQ1 to queuine (Q), resulting in the hypermodified nucleoside queuosine (7-(((4,5-cis-dihydroxy-2-cyclopenten-1-yl)amino)methyl)-7-deazaguanosine). This is Queuine tRNA-ribosyltransferase from Dichelobacter nodosus (strain VCS1703A).